Reading from the N-terminus, the 351-residue chain is 1-aminocyclopropane-1-carboxylate oxidase homolog 4 (351 aa).

The region spanning 200–304 (KSQYMVGQHY…AIVFSTFMRA (105 aa)) is the Fe2OG dioxygenase domain. Residues His224, Asp226, and His280 each coordinate Fe cation. Arg291 lines the 2-oxoglutarate pocket.

Belongs to the iron/ascorbate-dependent oxidoreductase family. Fe(2+) is required as a cofactor.

The protein is 1-aminocyclopropane-1-carboxylate oxidase homolog 4 of Arabidopsis thaliana (Mouse-ear cress).